Here is a 561-residue protein sequence, read N- to C-terminus: Inner membrane ABC transporter ATP-binding protein YddA (561 aa).

Residues 1–3 are Cytoplasmic-facing; that stretch reads MIT. The chain crosses the membrane as a helical span at residues 4–24; the sequence is IPITLRMLIAKYLCLLKPFWL. Residues 25–31 are Periplasmic-facing; it reads RKNNKTS. The chain crosses the membrane as a helical span at residues 32 to 52; it reads VLLIIIILAMILGVVKIQVWL. The ABC transmembrane type-1 domain occupies 35–337; sequence IIIILAMILG…FIYKYDELAE (303 aa). At 53 to 70 the chain is on the cytoplasmic side; sequence NDWNNDFFNALSQKETDK. Residues 71–91 traverse the membrane as a helical segment; it reads LWQLVLWFPALLGIFVLISVN. Topologically, residues 92-151 are periplasmic; that stretch reads KTWLIKLLTIRWREWLTDYYLNRWFADKNYYFTQIYGEHKNTDNPDQRIAEDILLLISKT. Residues 152 to 172 traverse the membrane as a helical segment; sequence LSLSFGFIQSLSMLITFTVIL. Over 173-187 the chain is Cytoplasmic; the sequence is WESAGTLSFTVGGTE. The helical transmembrane segment at 188–208 threads the bilayer; that stretch reads WNIQGYMVYTVVLIVIGGTLF. The Periplasmic portion of the chain corresponds to 209–290; it reads THKVGKRIRP…WQNIYSRSLS (82 aa). Residues 291 to 311 traverse the membrane as a helical segment; the sequence is VLPYFLLLPQFISGQINLGGL. Residues 312-561 lie on the Cytoplasmic side of the membrane; sequence MKSRQAFMLV…DDICDISAVL (250 aa). The ABC transporter domain maps to 367 to 561; sequence VQVADASIRT…DDICDISAVL (195 aa). 400–407 provides a ligand contact to ATP; that stretch reads GYSGAGKT.

It belongs to the ABC transporter superfamily.

It localises to the cell inner membrane. This Escherichia coli (strain K12) protein is Inner membrane ABC transporter ATP-binding protein YddA (yddA).